The chain runs to 404 residues: Sorting nexin-32 (404 aa).

Basic and acidic residues predominate over residues 1-10; sequence MEEQHQEAGN. Positions 1–29 are disordered; the sequence is MEEQHQEAGNESKPSSTSVDLQGDSPLQV. Residues 11 to 20 show a composition bias toward polar residues; it reads ESKPSSTSVD. The PX domain maps to 21–168; that stretch reads LQGDSPLQVE…SVFLEYSQDL (148 aa). Residues 255–336 adopt a coiled-coil conformation; that stretch reads TQEVNQLKRS…KARTRNREVR (82 aa).

The protein belongs to the sorting nexin family.

In terms of biological role, may be involved in several stages of intracellular trafficking. This chain is Sorting nexin-32 (Snx32), found in Mus musculus (Mouse).